A 317-amino-acid chain; its full sequence is Melanocyte-stimulating hormone receptor (317 aa).

Positions 1–28 (MPMQGAQGRLRGSLNATPPTTPHSGLAG) are disordered. Over 1 to 37 (MPMQGAQGRLRGSLNATPPTTPHSGLAGNQTGPWCLE) the chain is Extracellular. N29 is a glycosylation site (N-linked (GlcNAc...) asparagine). Residues 38-63 (VSIPDELFLSLGLVSLVENMLVVAAI) form a helical membrane-spanning segment. At 64-72 (AKNRNLHSP) the chain is on the cytoplasmic side. The helical transmembrane segment at 73-93 (MYYFICCLAVSDLLVSVSNVL) threads the bilayer. The Extracellular segment spans residues 94-118 (ETAVMLLLEAGVLAAWAGVVQQLDN). Residues 119–140 (AIDVFICGSMVSSLCFLGAIAV) traverse the membrane as a helical segment. Over 141–163 (DRYITIFYALRYHSIVTLPRARW) the chain is Cytoplasmic. The helical transmembrane segment at 164 to 183 (AIATIWAASVVCSTLFIAYY) threads the bilayer. Residues 184-191 (DCTAVLLC) are Extracellular-facing. Residues 192–211 (LVSFFLALVVLMAVLYMHML) form a helical membrane-spanning segment. The Cytoplasmic portion of the chain corresponds to 212–240 (ARACLHARSIARLHKRWRPVHQGLGLKGA). Residues 241 to 266 (ATLSILLGSFFLCWGPFFLHLTLIVL) traverse the membrane as a helical segment. Residues 267-279 (CPQHPTCSCVFKN) lie on the Extracellular side of the membrane. A helical transmembrane segment spans residues 280 to 300 (FKLFLTLIICNSIVDPLIYAF). Topologically, residues 301–317 (RSQELRKTLKEVLLCSW) are cytoplasmic. C315 carries the S-palmitoyl cysteine lipid modification.

The protein belongs to the G-protein coupled receptor 1 family. As to quaternary structure, interacts with MGRN1, but does not undergo MGRN1-mediated ubiquitination; this interaction competes with GNAS-binding and thus inhibits agonist-induced cAMP production. Interacts with OPN3; the interaction results in a decrease in MC1R-mediated cAMP signaling and ultimately a decrease in melanin production in melanocytes.

The protein localises to the cell membrane. Functionally, receptor for MSH (alpha, beta and gamma) and ACTH. The activity of this receptor is mediated by G proteins which activate adenylate cyclase. Mediates melanogenesis, the production of eumelanin (black/brown) and phaeomelanin (red/yellow), via regulation of cAMP signaling in melanocytes. The polypeptide is Melanocyte-stimulating hormone receptor (MC1R) (Mammuthus primigenius (Siberian woolly mammoth)).